Consider the following 882-residue polypeptide: Alanine--tRNA ligase (882 aa).

Zn(2+) is bound by residues H567, H571, C669, and H673.

Belongs to the class-II aminoacyl-tRNA synthetase family. Zn(2+) serves as cofactor.

The protein resides in the cytoplasm. It carries out the reaction tRNA(Ala) + L-alanine + ATP = L-alanyl-tRNA(Ala) + AMP + diphosphate. Catalyzes the attachment of alanine to tRNA(Ala) in a two-step reaction: alanine is first activated by ATP to form Ala-AMP and then transferred to the acceptor end of tRNA(Ala). Also edits incorrectly charged Ser-tRNA(Ala) and Gly-tRNA(Ala) via its editing domain. The chain is Alanine--tRNA ligase from Thermosynechococcus vestitus (strain NIES-2133 / IAM M-273 / BP-1).